A 425-amino-acid polypeptide reads, in one-letter code: MATNNDFGAFIEKVTISPTSTSSSPPSLQGLTFAIKDIFDVEGRVTGFGNPDWLRTHSAATSTAPVVSSLLEAGATALGITIMDEMAYSINGENAHYGTPRNPIAFDRVPGGSSSGSAVAVAARLVDFSIGTDTGGSVRVPASYCGIFGFRPSHGAVSTVGLTPMAQSFDTVGWFARDTATLKRVGCVLLQQHHLNPIEPSQLIIADDCFKLCSVPHDLLVQPLVGSVEKSFGGNTVVKKVNLGEYIGQNVPSLKHFMTSDDVTTQQEFCIPSLMALSSSMRLLQRHEFKINHGAWISSVKPEFGPGISERIEEAIRTSDEKIDHCRSVKSELITALSTLLGEKGVLVIPTVPGPPPHLQANVAALESFRSRAFSLLSIAGVSGFCQVSIPLGLHENLPVSVSLVAKYGSDGFLLSLVDSLAAFI.

Ala-2 carries the N-acetylalanine modification. Residues Lys-36 and Ser-113 each act as charge relay system in the active site. Ser-137 serves as the catalytic Acyl-ester intermediate.

This sequence belongs to the amidase family. As to expression, expressed in cotyledons, leaves and flower buds. Lower levels in roots, stems and siliques.

It is found in the cytoplasm. The protein localises to the nucleus. It localises to the nucleoplasm. It catalyses the reaction a monocarboxylic acid amide + H2O = a monocarboxylate + NH4(+). The enzyme catalyses indole-3-acetamide + H2O = (indol-3-yl)acetate + NH4(+). It carries out the reaction 2-phenylacetamide + H2O = 2-phenylacetate + NH4(+). The catalysed reaction is L-asparagine + H2O = L-aspartate + NH4(+). It catalyses the reaction 1-naphthaleneacetamide + H2O = 1-naphthaleneacetate + NH4(+). With respect to regulation, inhibited by phenylmethylsulfonyl fluoride (PMSF). Functionally, amidase involved in auxin biosynthesis. Converts indole-3-acetamide to indole-3-acetate. Converts phenyl-2-acetamide (PAM) to phenyl-2-acetate. Substrate preference is PAM &gt; IAM. Can also use L-asparagine and 1-naphtalene-acetamide as substrates, but not indole-3-acetonitrile or indole-3-acetyl-L-aspartic acid. This is Amidase 1 from Arabidopsis thaliana (Mouse-ear cress).